We begin with the raw amino-acid sequence, 474 residues long: Cbb3-type cytochrome c oxidase subunit CcoN1 (474 aa).

Topologically, residues 1-16 are cytoplasmic; it reads MNTATSTAYSYKVVRQ. A helical membrane pass occupies residues 17 to 37; that stretch reads FAIMTVVWGIVGMGLGVFIAA. The Periplasmic portion of the chain corresponds to 38-60; the sequence is QLAWPFLNFDLPWTSFGRLRPLH. Residue histidine 60 participates in heme b binding. A helical membrane pass occupies residues 61 to 81; that stretch reads TNAVIFAFGGCALFATSYYSV. Over 82–96 the chain is Cytoplasmic; sequence QRTCQTTLFAPKLAA. Residues 97–117 traverse the membrane as a helical segment; that stretch reads FTFWGWQLVILLAAISLPLGF. Topologically, residues 118–129 are periplasmic; it reads TSSKEYAELEWP. Residues 130–150 traverse the membrane as a helical segment; sequence IDILITIVWVAYAVVFFGTLA. The Cytoplasmic portion of the chain corresponds to 151 to 156; it reads KRKVKH. The helical transmembrane segment at 157–177 threads the bilayer; it reads IYVGNWFFGAFILTVAILHVV. Residues 178–205 are Periplasmic-facing; it reads NNLEIPVTAMKSYSLYAGATDAMVQWWY. The helical transmembrane segment at 206–226 threads the bilayer; it reads GHNAVGFFLTAGFLGIMYYFV. A Cu cation-binding site is contributed by histidine 207. Topologically, residues 227–238 are cytoplasmic; it reads PKQAERPVYSYR. A helical membrane pass occupies residues 239–259; sequence LSIVHFWALITVYIWAGPHHL. Residues histidine 257 and histidine 258 each contribute to the Cu cation site. The Periplasmic portion of the chain corresponds to 260–270; that stretch reads HYTALPDWAQS. The chain crosses the membrane as a helical span at residues 271 to 291; sequence LGMVMSLILLAPSWGGMINGM. Over 292–308 the chain is Cytoplasmic; that stretch reads MTLSGAWHKLRSDPILR. The helical transmembrane segment at 309–329 threads the bilayer; the sequence is FLVVSLAFYGMSTFEGPMMAI. Residues 330–345 are Periplasmic-facing; that stretch reads KTVNALSHYTDWTIGH. Heme b-binding residues include histidine 345 and histidine 347. The helical transmembrane segment at 346-366 threads the bilayer; that stretch reads VHAGALGWVAMVSIGALYHLV. Residues 367–384 are Cytoplasmic-facing; sequence PKVFGREQMHSIGLINTH. Residues 385 to 405 form a helical membrane-spanning segment; it reads FWLATIGTVLYIASMWVNGIA. Over 406–432 the chain is Periplasmic; that stretch reads QGLMWRAINDDGTLTYSFVESLEASHP. A helical transmembrane segment spans residues 433 to 453; that stretch reads GFVVRMIGGAIFFAGMLVMAY. The Cytoplasmic portion of the chain corresponds to 454 to 474; that stretch reads NTWRTVQAAKPAEYDAAAQIA.

This sequence belongs to the heme-copper respiratory oxidase family. As to quaternary structure, component of the cbb3-type cytochrome c oxidase at least composed of CcoN, CcoO, CcoQ and CcoP. Requires Cu(2+) as cofactor. The cofactor is heme b.

Its subcellular location is the cell inner membrane. The enzyme catalyses 4 Fe(II)-[cytochrome c] + O2 + 8 H(+)(in) = 4 Fe(III)-[cytochrome c] + 2 H2O + 4 H(+)(out). Its pathway is energy metabolism; oxidative phosphorylation. In terms of biological role, cbb3-type cytochrome c oxidase is the component of the respiratory chain that catalyzes the reduction of oxygen to water. Subunits CcoN and CcoO form the functional core of the enzyme complex. Subunits CcoP and CcoQ may optionally bind to the core. CcoN is the catalytic subunit of the enzyme. Electrons originating in cytochrome c or a quinol are transferred to the bimetallic center formed by a high-spin heme and copper B. The complex also functions as a proton pump. This Stutzerimonas stutzeri (Pseudomonas stutzeri) protein is Cbb3-type cytochrome c oxidase subunit CcoN1.